We begin with the raw amino-acid sequence, 78 residues long: Acyl carrier protein (78 aa).

One can recognise a Carrier domain in the interval 2–77 (SEIAQKVKSI…QAIAYLEQHV (76 aa)). Serine 37 carries the O-(pantetheine 4'-phosphoryl)serine modification.

It belongs to the acyl carrier protein (ACP) family. In terms of processing, 4'-phosphopantetheine is transferred from CoA to a specific serine of apo-ACP by AcpS. This modification is essential for activity because fatty acids are bound in thioester linkage to the sulfhydryl of the prosthetic group.

Its subcellular location is the cytoplasm. Its pathway is lipid metabolism; fatty acid biosynthesis. Carrier of the growing fatty acid chain in fatty acid biosynthesis. The sequence is that of Acyl carrier protein from Cytophaga hutchinsonii (strain ATCC 33406 / DSM 1761 / CIP 103989 / NBRC 15051 / NCIMB 9469 / D465).